A 107-amino-acid chain; its full sequence is CRISPR-associated endoribonuclease Cas2 (107 aa).

Residue aspartate 6 coordinates Mg(2+).

The protein belongs to the CRISPR-associated endoribonuclease Cas2 protein family. As to quaternary structure, homodimer, forms a heterotetramer with a Cas1 homodimer. Mg(2+) serves as cofactor.

Functionally, CRISPR (clustered regularly interspaced short palindromic repeat), is an adaptive immune system that provides protection against mobile genetic elements (viruses, transposable elements and conjugative plasmids). CRISPR clusters contain sequences complementary to antecedent mobile elements and target invading nucleic acids. CRISPR clusters are transcribed and processed into CRISPR RNA (crRNA). Functions as a ssRNA-specific endoribonuclease. Involved in the integration of spacer DNA into the CRISPR cassette. The chain is CRISPR-associated endoribonuclease Cas2 from Streptococcus mutans serotype c (strain NN2025).